We begin with the raw amino-acid sequence, 377 residues long: Mitochondrial pyrimidine nucleotide transporter RIM2 (377 aa).

Solcar repeat units follow at residues 50 to 163 (VKPW…TKDM), 173 to 262 (ETPM…MKRL), and 286 to 375 (KEWC…VIRL). 6 helical membrane-spanning segments follow: residues 53–73 (WVHFVAGGIGGMAGAVVTCPF), 131–151 (GFRSLFKGLGPNLVGVIPARS), 179–199 (LMAAATAGWATATATNPIWLI), 238–258 (GLSASYLGSVEGILQWLLYEQ), 286–306 (KEWCQRSGSAGLAKFVASIAT), and 347–368 (MYSGLTPHLMRTVPNSIIMFGT).

Belongs to the mitochondrial carrier (TC 2.A.29) family.

It localises to the mitochondrion inner membrane. It carries out the reaction 5-methyl-UTP(out) + UTP(in) = 5-methyl-UTP(in) + UTP(out). Mitochondrial transporter that imports/exports pyrimidine nucleotides into and from mitochondria. Selectively transports uridine, thymidine, and cytosine (deoxy)nucleoside di- and triphosphates by an antiport mechanism. Also transports, with lower efficiency, uridine, thymidine, and cytosine (deoxy)nucleoside monophosphates as well as guanosine (deoxy)nucleoside di- and triphosphate. May import (deoxy)nucleoside triphosphates in exchange for intramitochondrial (deoxy)nucleoside monophosphates, thus providing precursors necessary for de novo synthesis of mitochondrial DNA and RNA while exporting products of their catabolism. Mediates the transport of iron and other divalent metal ions like copper and zinc across the mitochondrial inner membrane in a pyrimidine nucleotide-dependent fashion. Catalyzes the co-import of pyrimidine nucleotides and divalent metal ions including ferrous iron. Participates in mitochondrial genome maintenance, regulation of mitochondrial membrane potential and mitochondrial respiration. The protein is Mitochondrial pyrimidine nucleotide transporter RIM2 (RIM2) of Saccharomyces cerevisiae (strain ATCC 204508 / S288c) (Baker's yeast).